A 102-amino-acid polypeptide reads, in one-letter code: RNA-binding protein Hfq (102 aa).

Positions 9 to 68 constitute a Sm domain; it reads DPFLNALRRERVPVSIYLVNGIKLQGQIESFDQFVILLKNTVSQMVYKHAISTVVPSRPV. The disordered stretch occupies residues 65-102; that stretch reads SRPVSHHSSNTSVGASVGNYHSGGVSAPAAQQESDGTE. Positions 93 to 102 are enriched in polar residues; the sequence is AAQQESDGTE.

It belongs to the Hfq family. As to quaternary structure, homohexamer.

Functionally, RNA chaperone that binds small regulatory RNA (sRNAs) and mRNAs to facilitate mRNA translational regulation in response to envelope stress, environmental stress and changes in metabolite concentrations. Also binds with high specificity to tRNAs. In Photorhabdus laumondii subsp. laumondii (strain DSM 15139 / CIP 105565 / TT01) (Photorhabdus luminescens subsp. laumondii), this protein is RNA-binding protein Hfq.